We begin with the raw amino-acid sequence, 600 residues long: Glutamine--fructose-6-phosphate aminotransferase [isomerizing] (600 aa).

The active-site Nucleophile; for GATase activity is the C2. In terms of domain architecture, Glutamine amidotransferase type-2 spans C2–D217. 2 SIS domains span residues I283 to K422 and I452 to P590. Catalysis depends on K595, which acts as the For Fru-6P isomerization activity.

Homodimer.

It is found in the cytoplasm. The enzyme catalyses D-fructose 6-phosphate + L-glutamine = D-glucosamine 6-phosphate + L-glutamate. Functionally, catalyzes the first step in hexosamine metabolism, converting fructose-6P into glucosamine-6P using glutamine as a nitrogen source. This is Glutamine--fructose-6-phosphate aminotransferase [isomerizing] from Shouchella clausii (strain KSM-K16) (Alkalihalobacillus clausii).